We begin with the raw amino-acid sequence, 393 residues long: MATPGEGNQPSDDGAPQPLAQLQKLEPRVVRRRLSQARHRATLVGLFNNLRKAVYSQSDITASKWQVLNRTKIHIQEQEESLDKLLKLKASFNLQDGNPNSLEEVKEEYARMYSENDSVFLNSFLQDSPPEWFPSEAVGPDAEEEGEEEGEEEGEEGEEEEEGDEEGEEEEENGEEREVEEYQEEEEEEEEEEKKVDLSHSSSTLLPDLMEFERYLNFYKQTMDLLTMNSIISAHEVTLPIVSAAISHLWQTLSEEKKARLLQVWEQQHSAFADLTEACLELAGVEGSMKDSGVDSQGASCSLESTPEEILFEDAFDVASFLDKSEAQHMSNISAMFATCNSENPEEKFQLYIQIIEFFKSLGCVNTPLNQEPEPPDDDDAMLLKCLETFDDL.

A compositionally biased stretch (polar residues) spans Met1–Ser11. The disordered stretch occupies residues Met1 to Leu25. Residues Arg28 to Arg33 carry the Nuclear localization signal (NLS) motif. Residues Gln66 to Gln95 adopt a coiled-coil conformation. The disordered stretch occupies residues Phe124 to Ser201. A compositionally biased stretch (acidic residues) spans Asp141 to Glu192. Residues Leu209–Phe218 carry the Nuclear export signal (NES) motif.

As to quaternary structure, interacts with XPO1. Interacts with MEIOSIN. Phosphorylated in P19 EC cells. In terms of tissue distribution, expressed exclusively in premeiotic germ cells in both sexes. In females, is expressed in the embryonic ovary. In males, is expressed in pubertal and adult testes, in premeiotic spermatogenic cells. Expressed by some type A and B spermatogonia, preleptotene spermatocytes, and early leptotene spermatocytes (at protein level). Expression begins in late undifferentiated spermatogonia and persists during differentiating spermatogonia (at protein level).

The protein resides in the cytoplasm. It localises to the nucleus. Meiosis-inducer required for the transition into meiosis for both female and male germ cells. In female germ cells, acts downstream of ZGLP1 as a key effector of the meiotic program: required for premeiotic DNA replication and subsequent events in meiotic prophase. During spermatogenesis, next to its role in meiotic initiation, promotes (but is not required for) spermatogonial differentiation. In complex with MEIOSIN, directly activates the transcription of a subset of critical meiotic genes playing a central role in cell-cycle switching from mitosis to meiosis. In Mus musculus (Mouse), this protein is Stimulated by retinoic acid gene 8 protein.